The sequence spans 440 residues: NK1 transcription factor-related protein 1 (440 aa).

The span at 1-13 (MSTSGPAAPGDVP) shows a compositional bias: low complexity. 3 disordered regions span residues 1-82 (MSTS…RPTS), 145-291 (GVAA…PRRA), and 342-387 (KWKK…PMGA). Residues 14–31 (ALPPPPPGPGSGPAPPAP) show a composition bias toward pro residues. Composition is skewed to low complexity over residues 62-74 (VPAV…AARP) and 145-158 (GVAA…TSAG). Residues 170 to 181 (GYSSGSGRSPTA) are compositionally biased toward polar residues. A compositionally biased stretch (acidic residues) spans 182–198 (DSEDEAPEDEDEEEAPE). A compositionally biased stretch (gly residues) spans 210–222 (GGSGGLGARGSGC). Positions 237–269 (AAPGPRGNSPGAPGPPATATGAGSAGSTPQGAA) are enriched in low complexity. Positions 288–347 (PRRARTAFTYEQLVALENKFKATRYLSVCERLNLALSLSLTETQVKIWFQNRRTKWKKQN) form a DNA-binding region, homeobox. Residues 356–374 (TGGGGGPGPGAGPGAGLPG) are compositionally biased toward gly residues.

It belongs to the NK-1 homeobox family.

It localises to the nucleus. In terms of biological role, may be required for the coordinated crosstalk of factors involved in the maintenance of energy homeostasis, possibly by regulating the transcription of specific factors involved in energy balance. The sequence is that of NK1 transcription factor-related protein 1 from Mus musculus (Mouse).